Consider the following 461-residue polypeptide: MNREIYDFVAIGIGPFNLSLASLSAPLRGVRTLFLDKKSGFDWHPGMLIETSTLQNPFLADLVSLADPRSEYSYLNYCKLTNRIYSYYMRENHYLSRAEYTRYCQWVAARLPNLRFGCDVQGVLHDPESHSYLVTGQHTMSGQRFMFRCRKLVLGLGSQPYLPACCDRRAAPFIHSADYLRHKYELQGRASITIVGSGQSAAEVFHDLLRESGRHDYSLAWITRSPRFFQMENTKLTLELISPDYTEYFHDLPEARRQEILTQQNSLYKGINASLINQIYDLLDEKVHDGDNRYTLLTNSELRACRYDPLQERFQLDFQHLDCDRPFSHATDGLVLATGYSHEIPACINPIHDRIAWNADGSYRIGRNYAIDHEGSEIFVQNTGLLSHGVTNPDLGFCCYRNSQILRELTGTEHYRIETRTALQEFSPPADGVLKHRPARRAERRPTVAARPLMDIHRATL.

An FAD-binding site is contributed by 9 to 15; the sequence is VAIGIGP.

It belongs to the lysine N(6)-hydroxylase/L-ornithine N(5)-oxygenase family. FAD is required as a cofactor.

It participates in siderophore biosynthesis; alcaligin biosynthesis. The protein is Alcaligin biosynthesis enzyme (alcA) of Bordetella parapertussis (strain 12822 / ATCC BAA-587 / NCTC 13253).